We begin with the raw amino-acid sequence, 80 residues long: Cell division topological specificity factor (80 aa).

Belongs to the MinE family.

Its function is as follows. Prevents the cell division inhibition by proteins MinC and MinD at internal division sites while permitting inhibition at polar sites. This ensures cell division at the proper site by restricting the formation of a division septum at the midpoint of the long axis of the cell. The protein is Cell division topological specificity factor of Wolinella succinogenes (strain ATCC 29543 / DSM 1740 / CCUG 13145 / JCM 31913 / LMG 7466 / NCTC 11488 / FDC 602W) (Vibrio succinogenes).